The primary structure comprises 210 residues: Outer-membrane lipoprotein LolB (210 aa).

The N-terminal stretch at 1 to 29 (MSLISNNEERSLRVRYCIAIALSALLISG) is a signal peptide. Cys30 carries the N-palmitoyl cysteine lipid modification. Residue Cys30 is the site of S-diacylglycerol cysteine attachment.

It belongs to the LolB family. In terms of assembly, monomer.

Its subcellular location is the cell outer membrane. Plays a critical role in the incorporation of lipoproteins in the outer membrane after they are released by the LolA protein. This is Outer-membrane lipoprotein LolB from Coxiella burnetii (strain CbuG_Q212) (Coxiella burnetii (strain Q212)).